Consider the following 188-residue polypeptide: GTPase KRas (188 aa).

Residues 10–18 (GAGGVGKSA), 29–35 (VDEYDPT), 59–60 (AG), and 116–119 (NKCD) each bind GTP. Residues 32–40 (YDPTIEDSY) carry the Effector region motif. Positions 167 to 188 (KEKMSKEGKKKKKKSKTKCVLM) are disordered. C185 is subject to Cysteine methyl ester. C185 carries S-farnesyl cysteine lipidation. Residues 186–188 (VLM) constitute a propeptide, removed in mature form.

The protein belongs to the small GTPase superfamily. Ras family.

The protein localises to the cell membrane. It localises to the cytoplasm. The enzyme catalyses GTP + H2O = GDP + phosphate + H(+). Its activity is regulated as follows. Alternates between an inactive form bound to GDP and an active form bound to GTP. Activated by a guanine nucleotide-exchange factor (GEF) and inactivated by a GTPase-activating protein (GAP). Functionally, ras proteins bind GDP/GTP and possess intrinsic GTPase activity. Plays an important role in the regulation of cell proliferation. May play a role in promoting oncogenic events by inducing transcriptional silencing of tumor suppressor genes (TSGs). The protein is GTPase KRas (kras) of Cyprinus carpio (Common carp).